Here is a 461-residue protein sequence, read N- to C-terminus: Argininosuccinate lyase (461 aa).

The protein belongs to the lyase 1 family. Argininosuccinate lyase subfamily.

It is found in the cytoplasm. The catalysed reaction is 2-(N(omega)-L-arginino)succinate = fumarate + L-arginine. It participates in amino-acid biosynthesis; L-arginine biosynthesis; L-arginine from L-ornithine and carbamoyl phosphate: step 3/3. The sequence is that of Argininosuccinate lyase from Dehalococcoides mccartyi (strain ATCC BAA-2266 / KCTC 15142 / 195) (Dehalococcoides ethenogenes (strain 195)).